A 112-amino-acid chain; its full sequence is Large ribosomal subunit protein eL33w (112 aa).

The protein belongs to the eukaryotic ribosomal protein eL33 family.

The polypeptide is Large ribosomal subunit protein eL33w (RPL35AA) (Arabidopsis thaliana (Mouse-ear cress)).